A 566-amino-acid polypeptide reads, in one-letter code: Arginine--tRNA ligase (566 aa).

Positions 121 to 131 (ANPNGPFHIGH) match the 'HIGH' region motif.

This sequence belongs to the class-I aminoacyl-tRNA synthetase family.

It is found in the cytoplasm. The catalysed reaction is tRNA(Arg) + L-arginine + ATP = L-arginyl-tRNA(Arg) + AMP + diphosphate. The chain is Arginine--tRNA ligase from Methanococcus maripaludis (strain C5 / ATCC BAA-1333).